Reading from the N-terminus, the 388-residue chain is Basigin (388 aa).

A signal peptide spans 1-22; that stretch reads MAAALLLALAFTFLSGQGACAA. Over 23 to 326 the chain is Extracellular; it reads AGFLKAPMSQ…ISLRVRSRLA (304 aa). An Ig-like domain is found at 37–120; that stretch reads GGSVVLHCEA…SSDPDRNHLT (84 aa). Intrachain disulfides connect Cys44–Cys108, Cys157–Cys203, and Cys242–Cys304. An Ig-like C2-type domain is found at 138 to 219; that stretch reads EPGTIVTSVQ…VGRGNINVEG (82 aa). N-linked (GlcNAc...) asparagine glycans are attached at residues Asn160, Asn269, and Asn305. Positions 221–320 constitute an Ig-like V-type domain; that stretch reads PRIKVGKKSE…GSARETISLR (100 aa). The helical transmembrane segment at 327–347 threads the bilayer; the sequence is ALWPFLGIVAEVLVLVTIIFI. At 348–388 the chain is on the cytoplasmic side; that stretch reads YEKRRKPDQTLDEDDPGAAPLKGSGSHLNDKDKNVRQRNAT. Positions 355–388 are disordered; the sequence is DQTLDEDDPGAAPLKGSGSHLNDKDKNVRQRNAT. The residue at position 357 (Thr357) is a Phosphothreonine. The residue at position 371 (Ser371) is a Phosphoserine.

As to quaternary structure, homooligomer. Interacts with NXNL1, SLC2A1 and SLC16A1/GLUT1. Interacts with XKR8; promoting its localization at the cell membrane. In terms of assembly, homooligomer. Interacts with SLC16A1; interaction mediates SLC16A1 targeting to the plasma membrane. Interacts with SLC16A3; interaction mediates SLC16A3 targeting to the plasma membrane. Interacts with VEGFA, KDR/VEGFR2, PPIA/CYPA, SLC16A12, SLC16A11, ATP1B2, MAG, L1CAM and AJAP1. Interacts with PPIL2; regulates BSG transport to the cell membrane. Interacts with SLC16A6; this interaction mediates targeting to the plasma membrane. As to expression, expressed in the skeletal muscle, liver, small intestine, kidney, testis, brain, heart and spleen. Also present in various immature cells and endothelia.

Its subcellular location is the cell membrane. The protein resides in the photoreceptor inner segment. It localises to the cell projection. The protein localises to the cilium. It is found in the photoreceptor outer segment. Its subcellular location is the endoplasmic reticulum membrane. The protein resides in the basolateral cell membrane. Essential for normal retinal maturation and development. Acts as a retinal cell surface receptor for NXNL1 and plays an important role in NXNL1-mediated survival of retinal cone photoreceptors. In association with glucose transporter SLC16A1/GLUT1 and NXNL1, promotes retinal cone survival by enhancing aerobic glycolysis and accelerating the entry of glucose into photoreceptors. Functionally, signaling receptor for cyclophilins, essential for PPIA/CYPA and PPIB/CYPB-dependent signaling related to chemotaxis and adhesion of immune cells. Plays an important role in targeting the monocarboxylate transporters SLC16A1/GLUT1 and SLC16A3 to the plasma membrane. Acts as a coreceptor for vascular endothelial growth factor receptor 2 (KDR/VEGFR2) in endothelial cells enhancing its VEGFA-mediated activation and downstream signaling. Promotes angiogenesis through EPAS1/HIF2A-mediated up-regulation of VEGFA and KDR/VEGFR2 in endothelial cells. Plays an important role in spermatogenesis; mediates interactions between germ cells and Sertoli cell and is essential for the development/differentiation of germ cells to round spermatids. The chain is Basigin (Bsg) from Rattus norvegicus (Rat).